Here is a 255-residue protein sequence, read N- to C-terminus: Ribosomal RNA small subunit methyltransferase A (255 aa).

The S-adenosyl-L-methionine site is built by asparagine 12, leucine 14, glycine 39, glutamate 60, aspartate 84, and asparagine 102.

Belongs to the class I-like SAM-binding methyltransferase superfamily. rRNA adenine N(6)-methyltransferase family. RsmA subfamily.

Its subcellular location is the cytoplasm. The catalysed reaction is adenosine(1518)/adenosine(1519) in 16S rRNA + 4 S-adenosyl-L-methionine = N(6)-dimethyladenosine(1518)/N(6)-dimethyladenosine(1519) in 16S rRNA + 4 S-adenosyl-L-homocysteine + 4 H(+). Functionally, specifically dimethylates two adjacent adenosines (A1518 and A1519) in the loop of a conserved hairpin near the 3'-end of 16S rRNA in the 30S particle. May play a critical role in biogenesis of 30S subunits. In Methylobacillus flagellatus (strain ATCC 51484 / DSM 6875 / VKM B-1610 / KT), this protein is Ribosomal RNA small subunit methyltransferase A.